Here is a 130-residue protein sequence, read N- to C-terminus: Methylglyoxal synthase (130 aa).

Positions 1–130 (MSKPRIALIA…DLARNMQDVC (130 aa)) constitute an MGS-like domain. Residues histidine 11, lysine 15, 37 to 40 (TGTT), and 57 to 58 (SG) contribute to the substrate site. Aspartate 63 (proton donor/acceptor) is an active-site residue. Position 90 (histidine 90) interacts with substrate.

Belongs to the methylglyoxal synthase family.

The enzyme catalyses dihydroxyacetone phosphate = methylglyoxal + phosphate. In terms of biological role, catalyzes the formation of methylglyoxal from dihydroxyacetone phosphate. The protein is Methylglyoxal synthase of Burkholderia ambifaria (strain MC40-6).